A 108-amino-acid chain; its full sequence is Phosphocarrier protein HPr (108 aa).

The HPr domain maps to 21–108 (ELQATCIVKN…DAFSSGFGEL (88 aa)). The active-site Pros-phosphohistidine intermediate is the His-35.

It belongs to the HPr family.

The protein localises to the cytoplasm. Functionally, general (non sugar-specific) component of the phosphoenolpyruvate-dependent sugar phosphotransferase system (sugar PTS). This major carbohydrate active-transport system catalyzes the phosphorylation of incoming sugar substrates concomitantly with their translocation across the cell membrane. The phosphoryl group from phosphoenolpyruvate (PEP) is transferred to the phosphoryl carrier protein HPr by enzyme I. Phospho-HPr then transfers it to the PTS EIIA domain. This chain is Phosphocarrier protein HPr (ptsH), found in Chlamydia pneumoniae (Chlamydophila pneumoniae).